Reading from the N-terminus, the 141-residue chain is Cystatin-S (141 aa).

The signal sequence occupies residues 1–20 (MARPLCTLLLLMATLAGALA). 2 positions are modified to phosphoserine: Ser21 and Ser23. The short motif at 76–80 (QTFGG) is the Secondary area of contact element. Disulfide bonds link Cys94–Cys104 and Cys118–Cys138.

Belongs to the cystatin family. Phosphorylated at both its N- and C-terminal regions. Expressed in submandibular and sublingual saliva but not in parotid saliva (at protein level). Expressed in saliva, tears, urine and seminal fluid.

It is found in the secreted. This protein strongly inhibits papain and ficin, partially inhibits stem bromelain and bovine cathepsin C, but does not inhibit porcine cathepsin B or clostripain. Papain is inhibited non-competitively. This Homo sapiens (Human) protein is Cystatin-S (CST4).